A 1014-amino-acid chain; its full sequence is Regulator of telomere elongation helicase 1 homolog (1014 aa).

In terms of domain architecture, Helicase ATP-binding spans 7–308 (RGVDVDFPYD…NSADKQFDPE (302 aa)). An ATP-binding site is contributed by 42–49 (SPTGTGKT). Positions 70 to 85 (GGGGGGGGGGGGGGGS) are enriched in gly residues. Positions 70-106 (GGGGGGGGGGGGGGGSQQPPYGSQPSGSQHSGGSASQ) are disordered. Low complexity predominate over residues 86–106 (QQPPYGSQPSGSQHSGGSASQ). [4Fe-4S] cluster contacts are provided by Cys-149, Cys-170, Cys-175, and Cys-211. The DEAH box signature appears at 255–258 (DEAH). The interval 906–930 (SSKKSNITHAPGNSGAIHEKSGGQE) is disordered.

This sequence belongs to the helicase family. RAD3/XPD subfamily.

The protein resides in the nucleus. It catalyses the reaction ATP + H2O = ADP + phosphate + H(+). Functionally, a probable ATP-dependent DNA helicase implicated in DNA replication, DNA repair and the maintenance of genomic stability. Acts as an anti-recombinase to counteract toxic recombination and limit crossover during meiosis. Regulates meiotic recombination and crossover homeostasis by physically dissociating strand invasion events and thereby promotes noncrossover repair by meiotic synthesis dependent strand annealing (SDSA) as well as disassembly of D loop recombination intermediates. This chain is Regulator of telomere elongation helicase 1 homolog, found in Oryza sativa subsp. japonica (Rice).